The chain runs to 182 residues: MEQARQVKISKFLSKHLRHTPERLGLVLAPGGWVAVDELLSACASHQFPISRADLEQVVSNNDKQRFSFDETATKIRANQGHSVEVDLQLQPQLPPPILYHGTGEKSVPAILKSGLLKMSRHHVHLSKDIETARTVGIRHGKPVIFSVDAMVMYQSGFTFYCSDNGVYLVDHVPPEYLHMMN.

This sequence belongs to the KptA/TPT1 family.

In terms of biological role, removes the 2'-phosphate from RNA via an intermediate in which the phosphate is ADP-ribosylated by NAD followed by a presumed transesterification to release the RNA and generate ADP-ribose 1''-2''-cyclic phosphate (APPR&gt;P). May function as an ADP-ribosylase. The chain is Probable RNA 2'-phosphotransferase from Trichormus variabilis (strain ATCC 29413 / PCC 7937) (Anabaena variabilis).